The chain runs to 185 residues: Large ribosomal subunit protein uL5 (185 aa).

This sequence belongs to the universal ribosomal protein uL5 family. Part of the 50S ribosomal subunit; part of the 5S rRNA/L5/L18/L25 subcomplex. Contacts the 5S rRNA and the P site tRNA. Forms a bridge to the 30S subunit in the 70S ribosome.

Its function is as follows. This is one of the proteins that bind and probably mediate the attachment of the 5S RNA into the large ribosomal subunit, where it forms part of the central protuberance. In the 70S ribosome it contacts protein S13 of the 30S subunit (bridge B1b), connecting the 2 subunits; this bridge is implicated in subunit movement. Contacts the P site tRNA; the 5S rRNA and some of its associated proteins might help stabilize positioning of ribosome-bound tRNAs. This chain is Large ribosomal subunit protein uL5, found in Bradyrhizobium sp. (strain ORS 278).